The chain runs to 250 residues: Pyrroloquinoline-quinone synthase (250 aa).

Belongs to the PqqC family.

The catalysed reaction is 6-(2-amino-2-carboxyethyl)-7,8-dioxo-1,2,3,4,7,8-hexahydroquinoline-2,4-dicarboxylate + 3 O2 = pyrroloquinoline quinone + 2 H2O2 + 2 H2O + H(+). Its pathway is cofactor biosynthesis; pyrroloquinoline quinone biosynthesis. In terms of biological role, ring cyclization and eight-electron oxidation of 3a-(2-amino-2-carboxyethyl)-4,5-dioxo-4,5,6,7,8,9-hexahydroquinoline-7,9-dicarboxylic-acid to PQQ. The polypeptide is Pyrroloquinoline-quinone synthase (Xanthomonas campestris pv. campestris (strain 8004)).